The primary structure comprises 153 residues: Glucose-6-phosphate 1-dehydrogenase (153 aa).

NADP(+) contacts are provided by arginine 21 and lysine 120. Residue lysine 120 participates in D-glucose 6-phosphate binding.

The protein belongs to the glucose-6-phosphate dehydrogenase family.

It is found in the cytoplasm. Its subcellular location is the cytosol. The catalysed reaction is D-glucose 6-phosphate + NADP(+) = 6-phospho-D-glucono-1,5-lactone + NADPH + H(+). It functions in the pathway carbohydrate degradation; pentose phosphate pathway; D-ribulose 5-phosphate from D-glucose 6-phosphate (oxidative stage): step 1/3. Functionally, cytosolic glucose-6-phosphate dehydrogenase that catalyzes the first and rate-limiting step of the oxidative branch within the pentose phosphate pathway/shunt, an alternative route to glycolysis for the dissimilation of carbohydrates and a major source of reducing power and metabolic intermediates for fatty acid and nucleic acid biosynthetic processes. The sequence is that of Glucose-6-phosphate 1-dehydrogenase (ZW) from Sarcophaga bullata (Grey flesh fly).